Reading from the N-terminus, the 197-residue chain is Probable GTP-binding protein EngB (197 aa).

The EngB-type G domain maps to 22–197; it reads TGVEVAFAGR…FKEKLDTWYQ (176 aa). GTP contacts are provided by residues 30-37, 57-61, 75-78, 142-145, and 177-179; these read GRSNAGKS, GRTQL, DLPG, TKAD, and FSS. Positions 37 and 59 each coordinate Mg(2+).

Belongs to the TRAFAC class TrmE-Era-EngA-EngB-Septin-like GTPase superfamily. EngB GTPase family. The cofactor is Mg(2+).

Functionally, necessary for normal cell division and for the maintenance of normal septation. This Francisella tularensis subsp. holarctica (strain FTNF002-00 / FTA) protein is Probable GTP-binding protein EngB.